A 113-amino-acid chain; its full sequence is T cell receptor alpha variable 8-3 (113 aa).

An N-terminal signal peptide occupies residues Met1 to Ala20. The Ig-like domain occupies Gln21 to Gly113. An intrachain disulfide couples Cys42 to Cys110. Residue Asn43 is glycosylated (N-linked (GlcNAc...) asparagine).

Alpha-beta TR is a heterodimer composed of an alpha and beta chain; disulfide-linked. The alpha-beta TR is associated with the transmembrane signaling CD3 coreceptor proteins to form the TR-CD3 (TcR or TCR). The assembly of alpha-beta TR heterodimers with CD3 occurs in the endoplasmic reticulum where a single alpha-beta TR heterodimer associates with one CD3D-CD3E heterodimer, one CD3G-CD3E heterodimer and one CD247 homodimer forming a stable octameric structure. CD3D-CD3E and CD3G-CD3E heterodimers preferentially associate with TR alpha and TR beta chains, respectively. The association of the CD247 homodimer is the last step of TcR assembly in the endoplasmic reticulum and is required for transport to the cell surface.

It localises to the cell membrane. In terms of biological role, v region of the variable domain of T cell receptor (TR) alpha chain that participates in the antigen recognition. Alpha-beta T cell receptors are antigen specific receptors which are essential to the immune response and are present on the cell surface of T lymphocytes. Recognize peptide-major histocompatibility (MH) (pMH) complexes that are displayed by antigen presenting cells (APC), a prerequisite for efficient T cell adaptive immunity against pathogens. Binding of alpha-beta TR to pMH complex initiates TR-CD3 clustering on the cell surface and intracellular activation of LCK that phosphorylates the ITAM motifs of CD3G, CD3D, CD3E and CD247 enabling the recruitment of ZAP70. In turn ZAP70 phosphorylates LAT, which recruits numerous signaling molecules to form the LAT signalosome. The LAT signalosome propagates signal branching to three major signaling pathways, the calcium, the mitogen-activated protein kinase (MAPK) kinase and the nuclear factor NF-kappa-B (NF-kB) pathways, leading to the mobilization of transcription factors that are critical for gene expression and essential for T cell growth and differentiation. The T cell repertoire is generated in the thymus, by V-(D)-J rearrangement. This repertoire is then shaped by intrathymic selection events to generate a peripheral T cell pool of self-MH restricted, non-autoaggressive T cells. Post-thymic interaction of alpha-beta TR with the pMH complexes shapes TR structural and functional avidity. This Homo sapiens (Human) protein is T cell receptor alpha variable 8-3.